The primary structure comprises 206 residues: MTEQPTNRNDVPRRGLGRDATVASICGLVVALMVGASYAAVPFYNWFCRATGFNGTTQVATAAPIAAPLPRKITVRFDSNVNGLPWKFTPEQTEIEIPIGQVVTVFYTVTNLSAHETTGQAAYNVAPLTVGAYFQKINCFCFTEQTFAAGETREMPVVFYVDPALAADPENDGLNSITLSYTFYPVRAPTPKPVAAGEPDSRKGAL.

The Cytoplasmic segment spans residues 1–22 (MTEQPTNRNDVPRRGLGRDATV). The chain crosses the membrane as a helical; Signal-anchor for type II membrane protein span at residues 23-43 (ASICGLVVALMVGASYAAVPF). Residues 44 to 206 (YNWFCRATGF…GEPDSRKGAL (163 aa)) are Periplasmic-facing.

The protein belongs to the COX11/CtaG family.

It localises to the cell inner membrane. In terms of biological role, exerts its effect at some terminal stage of cytochrome c oxidase synthesis, probably by being involved in the insertion of the copper B into subunit I. The chain is Cytochrome c oxidase assembly protein CtaG from Rhodopseudomonas palustris (strain BisB18).